The following is a 110-amino-acid chain: Large ribosomal subunit protein uL22 (110 aa).

The protein belongs to the universal ribosomal protein uL22 family. As to quaternary structure, part of the 50S ribosomal subunit.

Its function is as follows. This protein binds specifically to 23S rRNA; its binding is stimulated by other ribosomal proteins, e.g. L4, L17, and L20. It is important during the early stages of 50S assembly. It makes multiple contacts with different domains of the 23S rRNA in the assembled 50S subunit and ribosome. Functionally, the globular domain of the protein is located near the polypeptide exit tunnel on the outside of the subunit, while an extended beta-hairpin is found that lines the wall of the exit tunnel in the center of the 70S ribosome. The protein is Large ribosomal subunit protein uL22 of Buchnera aphidicola subsp. Schizaphis graminum (strain Sg).